Here is a 428-residue protein sequence, read N- to C-terminus: Adenylosuccinate synthetase (428 aa).

Residues G12–K18 and G40–T42 each bind GTP. D13 functions as the Proton acceptor in the catalytic mechanism. Positions 13 and 40 each coordinate Mg(2+). Residues D13–K16, N38–H41, T130, R144, Q225, T240, and R304 contribute to the IMP site. H41 (proton donor) is an active-site residue. V300 to R306 lines the substrate pocket. GTP contacts are provided by residues R306, K332 to D334, and S414 to G416.

It belongs to the adenylosuccinate synthetase family. Homodimer. Mg(2+) is required as a cofactor.

Its subcellular location is the cytoplasm. It catalyses the reaction IMP + L-aspartate + GTP = N(6)-(1,2-dicarboxyethyl)-AMP + GDP + phosphate + 2 H(+). Its pathway is purine metabolism; AMP biosynthesis via de novo pathway; AMP from IMP: step 1/2. Its function is as follows. Plays an important role in the de novo pathway of purine nucleotide biosynthesis. Catalyzes the first committed step in the biosynthesis of AMP from IMP. The sequence is that of Adenylosuccinate synthetase from Clostridium botulinum (strain 657 / Type Ba4).